Here is a 1442-residue protein sequence, read N- to C-terminus: MASAADALEPESGSSTAGGGSHPVRAARSARGRRRRSGGTRRAAAPDREYLQRPSYCDAAFALEQIAKGRATGRRAPLWLRAKFQRLLFNLGCYIQKNCGKFLVVGLLYSAFAVGLRAANLETNVEELWVEVGGRVSRELNYTRQKIGEEAMFNPQLMIQTPQEDGTNVLTTEALRQHLDSALQASRVHVYMYNRQWKLEHLCYKSGELITEAGYMDQIIEYLYPCLIITPLDCFWEGAKLQSGTAYLLGKPPLQWINFDPLEFLEELKKINYQVESWEEMLNKAEVGHGYMDRPCLNPADPDCPITAPNKNSTKPLDVALVLSGGCYGLSRKYMHWQEELIIGGTVKNSSGKLVSAQALQTMFQLMTPKQMYEHFKGYEYVSHINWNEDKAAAILEAWQRMYVEVVHQSVAQNSTQKVLSFTTTTLDDILKSFSDVSVIRVASGYLLMLAYACLTMLRWDCAKSQGAVGLAGVLLVALSVAAGLGLCSLIGISFNAATTQVLPFLALGVGVDDVFLLAHAFSETGQNKRIPFEDRTGECLKRTGASVALTSISNVTAFFMAALIPIPALRAFSLQAAVVVVFNFAMVLLIFPAILSMDLYRREDRRLDIFCCFTSPCVTRVIQIEPQAYAENDNICYSSPPPYSSHSFAHETQITMQSTVQLRTEYDPHTQAYYTTAEPRSEISVQPVTVTQDSLSCQSPESASSTRDLLSQFSDSSVHCLEPPCTKWTLSTFAEKHYAPFLLKPKAKVVVIFLFLGLLGLSLYGTTRVRDGLDLTDIVPRDTREYDFIAAQFKYFSFYNMYIVTQKADYPNVQHLLYELHRSFSNVTYVLLEGDRQLPKMWLHYFRDWLQGLQDAFDSDWETGKITYSNYKNGSDDAVLAYKLLVQTGNRAKPIDISQLTKQRLVDADGIINPNAFYIYLTAWVSNDPVAYAASQANIRPHRPEWVHDKADYMPETRLRIPAAEPIEYAQFPFYLNGLRETSDFVEAIEKVRAICNNYTSLGIASYPNGYPFLFWEQYIGLRHWLLLSISVVLACTFLVCALFLLNPWTAGIIVVVLALMTVELFGMMGLIGIKLSAVPVVILIASVGIGVEFTVHIALAFLTAIGDKNRRAVLALEHMFAPVLDGAVSTLLGVLMLAGSEFDFIVRYFFAVLAILTILGVLNGLVLLPVLLSFFGPYPEVSPACGRNRLPTPSPEPPPSIVRFALPPGHTNNGSDSSDSEYSSQTTVSGISEELHHYEATQSPGIPVHQVVVEATENPVFARSTVVQPESRHQSSPRLQSNPEAGTQQVWHQGRQPKQEVREGLRPPPYRPRRDAFEISTEGHSGPSNKDRLNHKAHSHNMRSPAFGAMGVPGSAYCQPITTVTASASVTVAVHPAVHSHNSCRGSFPSCEEYNEDDRGMFEDPHVPFNVRCERRNSKVEVIELQDVECEERTAGKISE.

Residues 1 to 45 form a disordered region; it reads MASAADALEPESGSSTAGGGSHPVRAARSARGRRRRSGGTRRAAA. At 1–101 the chain is on the cytoplasmic side; the sequence is MASAADALEP…GCYIQKNCGK (101 aa). Residues 28–39 show a composition bias toward basic residues; it reads RSARGRRRRSGG. Residues 102 to 122 form a helical membrane-spanning segment; that stretch reads FLVVGLLYSAFAVGLRAANLE. At 123-436 the chain is on the extracellular side; it reads TNVEELWVEV…LDDILKSFSD (314 aa). Residues N141, N312, N349, and N414 are each glycosylated (N-linked (GlcNAc...) asparagine). Residues 437–457 form a helical membrane-spanning segment; it reads VSVIRVASGYLLMLAYACLTM. Residues 438-598 enclose the SSD domain; the sequence is SVIRVASGYL…LLIFPAILSM (161 aa). Residues 458-472 lie on the Cytoplasmic side of the membrane; it reads LRWDCAKSQGAVGLA. A helical transmembrane segment spans residues 473–493; the sequence is GVLLVALSVAAGLGLCSLIGI. Topologically, residues 494-501 are extracellular; that stretch reads SFNAATTQ. Residues 502–522 traverse the membrane as a helical segment; sequence VLPFLALGVGVDDVFLLAHAF. The Cytoplasmic portion of the chain corresponds to 523–547; it reads SETGQNKRIPFEDRTGECLKRTGAS. A helical transmembrane segment spans residues 548–568; the sequence is VALTSISNVTAFFMAALIPIP. Topologically, residues 569 to 577 are extracellular; the sequence is ALRAFSLQA. The helical transmembrane segment at 578–598 threads the bilayer; that stretch reads AVVVVFNFAMVLLIFPAILSM. Residues 599–747 lie on the Cytoplasmic side of the membrane; it reads DLYRREDRRL…HYAPFLLKPK (149 aa). The chain crosses the membrane as a helical span at residues 748–768; it reads AKVVVIFLFLGLLGLSLYGTT. At 769–1026 the chain is on the extracellular side; sequence RVRDGLDLTD…WEQYIGLRHW (258 aa). N827, N874, and N999 each carry an N-linked (GlcNAc...) asparagine glycan. Residues 1027–1047 form a helical membrane-spanning segment; that stretch reads LLLSISVVLACTFLVCALFLL. The Cytoplasmic segment spans residues 1048–1053; it reads NPWTAG. The helical transmembrane segment at 1054–1074 threads the bilayer; that stretch reads IIVVVLALMTVELFGMMGLIG. At 1075-1082 the chain is on the extracellular side; the sequence is IKLSAVPV. A helical transmembrane segment spans residues 1083–1101; the sequence is VILIASVGIGVEFTVHIAL. At 1102–1120 the chain is on the cytoplasmic side; sequence AFLTAIGDKNRRAVLALEH. A helical membrane pass occupies residues 1121 to 1141; that stretch reads MFAPVLDGAVSTLLGVLMLAG. Over 1142 to 1153 the chain is Extracellular; that stretch reads SEFDFIVRYFFA. A helical transmembrane segment spans residues 1154–1174; the sequence is VLAILTILGVLNGLVLLPVLL. Residues 1175–1442 lie on the Cytoplasmic side of the membrane; it reads SFFGPYPEVS…EERTAGKISE (268 aa). 2 disordered regions span residues 1188–1231 and 1266–1338; these read GRNR…TTVS and STVV…LNHK. Low complexity predominate over residues 1217–1226; the sequence is SDSSDSEYSS. The segment covering 1276–1293 has biased composition (polar residues); sequence QSSPRLQSNPEAGTQQVW.

This sequence belongs to the patched family. Glycosylation is necessary for SHH binding. In terms of tissue distribution, expression is seen in the embryonic neural tube, sclerotome, visceral mesoderm, and limb bud.

The protein resides in the membrane. Acts as a receptor for sonic hedgehog (SHH), indian hedgehog (IHH) and desert hedgehog (DHH). Associates with the smoothened protein (SMO) to transduce the hedgehog's proteins signal. This Gallus gallus (Chicken) protein is Protein patched homolog 1 (PTCH1).